The sequence spans 426 residues: Enolase (426 aa).

Gln163 serves as a coordination point for (2R)-2-phosphoglycerate. Residue Glu205 is the Proton donor of the active site. Mg(2+) contacts are provided by Asp242, Glu285, and Asp312. (2R)-2-phosphoglycerate-binding residues include Lys337, Arg366, Ser367, and Lys388. Lys337 functions as the Proton acceptor in the catalytic mechanism.

The protein belongs to the enolase family. Requires Mg(2+) as cofactor.

It is found in the cytoplasm. The protein resides in the secreted. Its subcellular location is the cell surface. The enzyme catalyses (2R)-2-phosphoglycerate = phosphoenolpyruvate + H2O. It participates in carbohydrate degradation; glycolysis; pyruvate from D-glyceraldehyde 3-phosphate: step 4/5. In terms of biological role, catalyzes the reversible conversion of 2-phosphoglycerate (2-PG) into phosphoenolpyruvate (PEP). It is essential for the degradation of carbohydrates via glycolysis. The polypeptide is Enolase (Phenylobacterium zucineum (strain HLK1)).